The sequence spans 312 residues: MLAEQFTDKNKHAEQELSPGSSAVTGARNWRASLTLNLTKESNRTILKQAAHQGPLRVQRPFYPEGAQRPHIYILHPPGGLVCGDEIEIDAKLEHGAEALLTTPSAGKIYRTDAAGHRQCQTVRLNCADAQSLEWLPQENIIYDGAEGAQTLLLETSAASRFIAWEITALGRPAADAPFASGAFTQTTRILRDSAPCFFERVALRGEGPGFQEPWGLQGQQVYGSLLAGYVQDSPQKRLQQCREALQANTAIAALGDSKDLRWTLTRKDDLIILRALCQQSEPIKRLFMAAWSLLRPALIGVESHPPRIWAT.

Residues 1-15 (MLAEQFTDKNKHAEQ) are compositionally biased toward basic and acidic residues. Residues 1 to 24 (MLAEQFTDKNKHAEQELSPGSSAV) form a disordered region.

It belongs to the UreD family. As to quaternary structure, ureD, UreF and UreG form a complex that acts as a GTP-hydrolysis-dependent molecular chaperone, activating the urease apoprotein by helping to assemble the nickel containing metallocenter of UreC. The UreE protein probably delivers the nickel.

The protein resides in the cytoplasm. Functionally, required for maturation of urease via the functional incorporation of the urease nickel metallocenter. In Hahella chejuensis (strain KCTC 2396), this protein is Urease accessory protein UreD.